The primary structure comprises 138 residues: Large ribosomal subunit protein uL16 (138 aa).

Residues 1–13 show a composition bias toward basic residues; the sequence is MLQPSRRKFRKEQ. The tract at residues 1-20 is disordered; the sequence is MLQPSRRKFRKEQKGRNTGV.

Belongs to the universal ribosomal protein uL16 family. Part of the 50S ribosomal subunit.

Binds 23S rRNA and is also seen to make contacts with the A and possibly P site tRNAs. The protein is Large ribosomal subunit protein uL16 of Leptothrix cholodnii (strain ATCC 51168 / LMG 8142 / SP-6) (Leptothrix discophora (strain SP-6)).